Reading from the N-terminus, the 1193-residue chain is Pyruvate carboxylase (1193 aa).

The region spanning 41 to 493 (QFQKILVANR…WTTFIDDTTE (453 aa)) is the Biotin carboxylation domain. ATP is bound by residues lysine 159, glutamate 243, and histidine 278. The ATP-grasp domain occupies 163 to 360 (RQLAIRCNVP…IVAAQIQIAA (198 aa)). Residue arginine 335 is part of the active site. Residues 579–847 (CLIMDTTWRD…DPGLNSAHVR (269 aa)) enclose the Pyruvate carboxyltransferase domain. Residues 587–591 (RDAHQ) and arginine 660 each bind substrate. An a divalent metal cation-binding site is contributed by aspartate 588. Positions 756, 786, and 788 each coordinate a divalent metal cation. Lysine 756 bears the N6-carboxylysine mark. Threonine 921 provides a ligand contact to substrate. The Biotinyl-binding domain occupies 1116–1191 (KADVGDSSQV…DGQDLVCKIT (76 aa)). Lysine 1157 carries the post-translational modification N6-biotinyllysine.

It depends on biotin as a cofactor. Requires Zn(2+) as cofactor.

It localises to the cytoplasm. The catalysed reaction is hydrogencarbonate + pyruvate + ATP = oxaloacetate + ADP + phosphate + H(+). Its pathway is carbohydrate biosynthesis; gluconeogenesis. In terms of biological role, pyruvate carboxylase catalyzes a 2-step reaction, involving the ATP-dependent carboxylation of the covalently attached biotin in the first step and the transfer of the carboxyl group to pyruvate in the second. In Aspergillus terreus (strain NIH 2624 / FGSC A1156), this protein is Pyruvate carboxylase (pyc).